The primary structure comprises 519 residues: Cyclic AMP-responsive element-binding protein 3-like protein 2 (519 aa).

The Cytoplasmic segment spans residues 1–374 (MEIMDSGEPF…SCRVTGTQTS (374 aa)). Disordered regions lie at residues 58–77 (GRGDAMDTEEELTRASPVPP), 85–121 (YSLCGDSRPQSPLSHLPGEPGSDAADSESDEWPMEQE), and 193–261 (GLEC…SGPL). Over residues 109–119 (ADSESDEWPME) the composition is skewed to acidic residues. Composition is skewed to low complexity over residues 205 to 217 (SSVGSDSEGSQSP) and 240 to 249 (PSSLSSSPLL). In terms of domain architecture, bZIP spans 291 to 354 (ALKKIRRKIK…KSLLQQLHSL (64 aa)). The tract at residues 293–322 (KKIRRKIKNKISAQESRRKKKEYVDALEKK) is basic motif. The leucine-zipper stretch occupies residues 333–354 (LRRKVENLECTNKSLLQQLHSL). A helical; Signal-anchor for type II membrane protein membrane pass occupies residues 375–395 (TCLMVVVLCFSLFLGSFYPGL). The Lumenal portion of the chain corresponds to 396 to 519 (SPCSSITKAD…QLDRTVNETS (124 aa)). The S1P recognition signature appears at 423–426 (RSLL). 3 N-linked (GlcNAc...) asparagine glycosylation sites follow: asparagine 485, asparagine 503, and asparagine 516.

Belongs to the bZIP family. ATF subfamily. As to quaternary structure, binds DNA as a dimer. Post-translationally, upon ER stress, translocated to the Golgi apparatus, where it is processed by regulated intramembrane proteolysis (RIP) to release the cytosol-facing N-terminal transcription factor domain. The cleavage is performed sequentially by site-1 and site-2 proteases (S1P/mbtps1 and S2P/mbtps2).

The protein resides in the endoplasmic reticulum membrane. The protein localises to the nucleus. In terms of biological role, transcription factor involved in unfolded protein response (UPR). In the absence of endoplasmic reticulum (ER) stress, inserted into ER membranes, with N-terminal DNA-binding and transcription activation domains oriented toward the cytosolic face of the membrane. In response to ER stress, transported to the Golgi, where it is cleaved in a site-specific manner by resident proteases S1P/mbtps1 and S2P/mbtps2. The released N-terminal cytosolic domain is translocated to the nucleus to effect transcription of specific target genes. Plays a critical role in chondrogenesis. May protect neuroblastoma cells from ER stress-induced death. In vitro activates transcription of target genes via direct binding to the CRE site. The chain is Cyclic AMP-responsive element-binding protein 3-like protein 2 (creb3l2) from Danio rerio (Zebrafish).